The sequence spans 151 residues: Large ribosomal subunit protein bL9 (151 aa).

This sequence belongs to the bacterial ribosomal protein bL9 family.

In terms of biological role, binds to the 23S rRNA. In Pseudothermotoga lettingae (strain ATCC BAA-301 / DSM 14385 / NBRC 107922 / TMO) (Thermotoga lettingae), this protein is Large ribosomal subunit protein bL9.